Consider the following 228-residue polypeptide: uncharacterized protein (228 aa).

Transmembrane regions (helical) follow at residues 14–34 (GWYI…MWLI), 53–73 (FLII…VLIV), 108–128 (GLTF…FFWL), 148–168 (AVKM…PIFF), 178–198 (TIIS…GFSI), and 200–220 (SVVY…YMAI).

The protein resides in the cell membrane. This is an uncharacterized protein from Bacillus subtilis (strain 168).